A 433-amino-acid polypeptide reads, in one-letter code: Glutamate-1-semialdehyde 2,1-aminomutase (433 aa).

Residue lysine 270 is modified to N6-(pyridoxal phosphate)lysine.

Belongs to the class-III pyridoxal-phosphate-dependent aminotransferase family. HemL subfamily. Homodimer. Pyridoxal 5'-phosphate serves as cofactor.

The protein resides in the cytoplasm. The enzyme catalyses (S)-4-amino-5-oxopentanoate = 5-aminolevulinate. It participates in porphyrin-containing compound metabolism; protoporphyrin-IX biosynthesis; 5-aminolevulinate from L-glutamyl-tRNA(Glu): step 2/2. In Clostridium novyi (strain NT), this protein is Glutamate-1-semialdehyde 2,1-aminomutase.